An 890-amino-acid polypeptide reads, in one-letter code: Tyrosine-protein kinase receptor TYRO3 (890 aa).

A signal peptide spans 1-40 (MALRRSMGRPGLPPLPLPPPPRLGLLLAALASLLLPESAA). Ig-like C2-type domains follow at residues 41–128 (AGLK…TEIS) and 139–220 (PFFT…ATVH). At 41–429 (AGLKLMGAPV…QGPPHSRTSW (389 aa)) the chain is on the extracellular side. Residue N63 is glycosylated (N-linked (GlcNAc...) asparagine). 2 disulfide bridges follow: C64–C117 and C160–C203. N-linked (GlcNAc...) asparagine glycosylation is found at N191, N230, N240, N293, N366, and N380. Fibronectin type-III domains are found at residues 227–320 (APFN…TKGL) and 325–416 (APQN…SHDR). The helical transmembrane segment at 430 to 450 (VPVVLGVLTALVTAAALALIL) threads the bilayer. At 451–890 (LRKRRKETRF…QQGLLPHSSC (440 aa)) the chain is on the cytoplasmic side. S466 bears the Phosphoserine mark. Residues 518–790 (FTLGRMLGKG…CLRMELENIL (273 aa)) form the Protein kinase domain. Residues 524–532 (LGKGEFGSV) and K550 contribute to the ATP site. D655 acts as the Proton acceptor in catalysis. Y681, Y685, Y686, and Y804 each carry phosphotyrosine; by autocatalysis. Disordered regions lie at residues 815–837 (AGGS…GSGM) and 851–871 (LTPG…ESPL). 2 positions are modified to phosphoserine: S818 and S869.

Belongs to the protein kinase superfamily. Tyr protein kinase family. AXL/UFO subfamily. In terms of assembly, monomer and homodimer. Interacts (via N-terminus) with extracellular ligands TULP1 and GAS6. Interacts with PIK3R1; this interaction increases PI3-kinase activity. Autophosphorylated. Abundant in the brain and lower levels in other tissues.

The protein resides in the cell membrane. It catalyses the reaction L-tyrosyl-[protein] + ATP = O-phospho-L-tyrosyl-[protein] + ADP + H(+). In terms of biological role, receptor tyrosine kinase that transduces signals from the extracellular matrix into the cytoplasm by binding to several ligands including TULP1 or GAS6. Regulates many physiological processes including cell survival, migration and differentiation. Ligand binding at the cell surface induces dimerization and autophosphorylation of TYRO3 on its intracellular domain that provides docking sites for downstream signaling molecules. Following activation by ligand, interacts with PIK3R1 and thereby enhances PI3-kinase activity. Activates the AKT survival pathway, including nuclear translocation of NF-kappa-B and up-regulation of transcription of NF-kappa-B-regulated genes. TYRO3 signaling plays a role in various processes such as neuron protection from excitotoxic injury, platelet aggregation and cytoskeleton reorganization. Also plays an important role in inhibition of Toll-like receptors (TLRs)-mediated innate immune response by activating STAT1, which selectively induces production of suppressors of cytokine signaling SOCS1 and SOCS3. (Microbial infection) Acts as a receptor for lassa virus and lymphocytic choriomeningitis virus, possibly through GAS6 binding to phosphatidyl-serine at the surface of virion envelope. Its function is as follows. (Microbial infection) Acts as a receptor for Ebolavirus, possibly through GAS6 binding to phosphatidyl-serine at the surface of virion envelope. The sequence is that of Tyrosine-protein kinase receptor TYRO3 (TYRO3) from Homo sapiens (Human).